The sequence spans 453 residues: DDB1- and CUL4-associated factor 12 (453 aa).

The span at 1-12 (MARKAVSRKRKA) shows a compositional bias: basic residues. The tract at residues 1 to 26 (MARKAVSRKRKAPASPGAGSDAQGQQ) is disordered. Residues 1–38 (MARKAVSRKRKAPASPGAGSDAQGQQFGWDHTLHKRKR) are required for nuclear location and interaction with MOV10. Ser-15 is modified (phosphoserine). 4 WD repeats span residues 138-178 (QQGC…PVCV), 182-220 (GHKD…LTKS), 250-289 (PDNC…SKLL), and 338-375 (ERGS…FLEE).

This sequence belongs to the WD repeat DCAF12 family. Component of the DCX(DCAF12) E3 ubiquitin ligase complex, at least composed of CUL4 (CUL4A or CUL4B), DDB1, DCAF12 and RBX1.

Its subcellular location is the cytoplasm. It localises to the cytoskeleton. It is found in the microtubule organizing center. The protein localises to the centrosome. The protein resides in the nucleus. Its pathway is protein modification; protein ubiquitination. Its function is as follows. Substrate-recognition component of a DCX (DDB1-CUL4-X-box) E3 ubiquitin-protein ligase complex of the DesCEND (destruction via C-end degrons) pathway, which recognizes a C-degron located at the extreme C terminus of target proteins, leading to their ubiquitination and degradation. The C-degron recognized by the DesCEND pathway is usually a motif of less than ten residues and can be present in full-length proteins, truncated proteins or proteolytically cleaved forms. The DCX(DCAF12) complex specifically recognizes proteins with a diglutamate (Glu-Glu) at the C-terminus, such as MAGEA3, MAGEA6 and CCT5, leading to their ubiquitination and degradation. Ubiquitination of MAGEA3, MAGEA6 by DCX(DCAF12) complex is required for starvation-induced autophagy. Also directly recognizes the C-terminal glutamate-leucine (Glu-Leu) degron as an alternative degron in proteins such as MOV10, leading to their ubiquitination and degradation. Controls the protein level of MOV10 during spermatogenesis and in T cells, especially after their activation. This chain is DDB1- and CUL4-associated factor 12 (DCAF12), found in Macaca fascicularis (Crab-eating macaque).